The primary structure comprises 533 residues: Flavin-containing monooxygenase 5 (533 aa).

Residue Arg-5 is modified to Dimethylated arginine. FAD is bound by residues 10-14 (GAGAS), Glu-33, and 41-42 (LW). Ser-54 carries the post-translational modification Phosphoserine. Tyr-56 carries the post-translational modification Phosphotyrosine. Residue Ser-58 is modified to Phosphoserine. 62–63 (NT) is a binding site for FAD. 196-199 (SGGD) contacts NADP(+). A Phosphoserine modification is found at Ser-280. Thr-284 bears the Phosphothreonine mark. At Ser-401 the chain carries Phosphoserine. The helical transmembrane segment at 513-533 (LVTVRVLMLAVAFFAVILAYF) threads the bilayer.

It belongs to the FMO family. FAD is required as a cofactor. In terms of tissue distribution, expressed in liver (at protein level). Expressed in the mucosal epithelium of the gastrointestinal tract.

It is found in the microsome membrane. The protein resides in the endoplasmic reticulum membrane. The enzyme catalyses N,N-dimethylaniline + NADPH + O2 + H(+) = N,N-dimethylaniline N-oxide + NADP(+) + H2O. It catalyses the reaction NADPH + O2 + H(+) = H2O2 + NADP(+). It carries out the reaction heptan-2-one + NADPH + O2 + H(+) = pentyl acetate + NADP(+) + H2O. The catalysed reaction is octan-3-one + NADPH + O2 + H(+) = pentyl propanoate + NADP(+) + H2O. The enzyme catalyses octan-3-one + NADPH + O2 + H(+) = ethyl hexanoate + NADP(+) + H2O. It catalyses the reaction hexan-3-one + NADPH + O2 + H(+) = ethyl butanoate + NADP(+) + H2O. It carries out the reaction hexan-3-one + NADPH + O2 + H(+) = propyl propanoate + NADP(+) + H2O. The catalysed reaction is heptan-4-one + NADPH + O2 + H(+) = propyl butanoate + NADP(+) + H2O. The enzyme catalyses (2E)-geranial + NADPH + O2 + H(+) = (1E)-2,6-dimethylhepta-1,5-dien-1-yl formate + NADP(+) + H2O. It catalyses the reaction sulcatone + NADPH + O2 + H(+) = 4-methylpent-3-en-1-yl acetate + NADP(+) + H2O. Acts as a Baeyer-Villiger monooxygenase on a broad range of substrates. Catalyzes the insertion of an oxygen atom into a carbon-carbon bond adjacent to a carbonyl, which converts ketones to esters. Active on diverse carbonyl compounds, whereas soft nucleophiles are mostly non- or poorly reactive. In contrast with other forms of FMO it is non- or poorly active on 'classical' substrates such as drugs, pesticides, and dietary components containing soft nucleophilic heteroatoms. Able to oxidize drug molecules bearing a carbonyl group on an aliphatic chain, such as nabumetone and pentoxifylline. Also, in the absence of substrates, shows slow but yet significant NADPH oxidase activity. Acts as a positive modulator of cholesterol biosynthesis as well as glucose homeostasis, promoting metabolic aging via pleiotropic effects. The chain is Flavin-containing monooxygenase 5 from Mus musculus (Mouse).